Consider the following 301-residue polypeptide: 2-methylisocitrate lyase (301 aa).

53–55 (SGA) is a binding site for substrate. 2 residues coordinate Mg(2+): D92 and D94. Substrate contacts are provided by residues 129-130 (CG), R162, E192, 214-216 (NMT), R245, and R274.

Belongs to the isocitrate lyase/PEP mutase superfamily. Methylisocitrate lyase family. Mg(2+) serves as cofactor.

It catalyses the reaction 3-hydroxybutane-1,2,3-tricarboxylate = pyruvate + succinate. Functionally, involved in the methylcitric acid cycle. Catalyzes the cleavage of 2-methylisocitrate to yield pyruvate and succinate. In Bacillus subtilis (strain 168), this protein is 2-methylisocitrate lyase.